The chain runs to 196 residues: uncharacterized protein (196 aa).

The helical transmembrane segment at 20–40 (GALALGCIALLLMGIVGCTTV) threads the bilayer.

Its subcellular location is the membrane. This is an uncharacterized protein from Mycobacterium tuberculosis (strain CDC 1551 / Oshkosh).